The sequence spans 277 residues: 2-dehydro-3-deoxyphosphooctonate aldolase (277 aa).

It belongs to the KdsA family.

It localises to the cytoplasm. It catalyses the reaction D-arabinose 5-phosphate + phosphoenolpyruvate + H2O = 3-deoxy-alpha-D-manno-2-octulosonate-8-phosphate + phosphate. It participates in carbohydrate biosynthesis; 3-deoxy-D-manno-octulosonate biosynthesis; 3-deoxy-D-manno-octulosonate from D-ribulose 5-phosphate: step 2/3. Its pathway is bacterial outer membrane biogenesis; lipopolysaccharide biosynthesis. The polypeptide is 2-dehydro-3-deoxyphosphooctonate aldolase (Brucella melitensis biotype 2 (strain ATCC 23457)).